The sequence spans 175 residues: uncharacterized protein (175 aa).

This is an uncharacterized protein from Enterobacteria phage T4 (Bacteriophage T4).